The following is a 122-amino-acid chain: Large ribosomal subunit protein bL12 (122 aa).

This sequence belongs to the bacterial ribosomal protein bL12 family. As to quaternary structure, homodimer. Part of the ribosomal stalk of the 50S ribosomal subunit. Forms a multimeric L10(L12)X complex, where L10 forms an elongated spine to which 2 to 4 L12 dimers bind in a sequential fashion. Binds GTP-bound translation factors.

Its function is as follows. Forms part of the ribosomal stalk which helps the ribosome interact with GTP-bound translation factors. Is thus essential for accurate translation. This chain is Large ribosomal subunit protein bL12, found in Clostridium botulinum (strain 657 / Type Ba4).